Consider the following 469-residue polypeptide: Receptor-type adenylate cyclase (469 aa).

The Extracellular portion of the chain corresponds to 1–59 (VDTAEKLSKNGCASNYGATQISVWSMARALNASIPPLTNPMTPSMTFRNSNAGRISGVA). A glycan (N-linked (GlcNAc...) asparagine) is linked at N31. A helical transmembrane segment spans residues 60–80 (LVGVIIGGALALFLVVALGVV). At 81–469 (PYFFLHNTRD…IDLENDSTTS (389 aa)) the chain is on the cytoplasmic side. The region spanning 103-257 (TLIFTDIESS…RTSNMAARTE (155 aa)) is the Guanylate cyclase domain. Residues D108 and D151 each coordinate Mg(2+).

Belongs to the adenylyl cyclase class-3 family. The cofactor is Mg(2+).

The protein resides in the cell membrane. The enzyme catalyses ATP = 3',5'-cyclic AMP + diphosphate. Could act as a receptor for an unknown ligand. In Trypanosoma equiperdum, this protein is Receptor-type adenylate cyclase (ESAG4C).